The sequence spans 271 residues: Dermonecrotic toxin LarSicTox-alphaIB1c (271 aa).

Residue His-3 is part of the active site. Residues Glu-23 and Asp-25 each coordinate Mg(2+). His-39 serves as the catalytic Nucleophile. Disulfide bonds link Cys-43-Cys-49 and Cys-45-Cys-188. Position 83 (Asp-83) interacts with Mg(2+). The N-linked (GlcNAc...) asparagine glycan is linked to Asn-248.

The protein belongs to the arthropod phospholipase D family. Class II subfamily. Mg(2+) is required as a cofactor. Expressed by the venom gland.

It is found in the secreted. The enzyme catalyses an N-(acyl)-sphingosylphosphocholine = an N-(acyl)-sphingosyl-1,3-cyclic phosphate + choline. It carries out the reaction an N-(acyl)-sphingosylphosphoethanolamine = an N-(acyl)-sphingosyl-1,3-cyclic phosphate + ethanolamine. The catalysed reaction is a 1-acyl-sn-glycero-3-phosphocholine = a 1-acyl-sn-glycero-2,3-cyclic phosphate + choline. It catalyses the reaction a 1-acyl-sn-glycero-3-phosphoethanolamine = a 1-acyl-sn-glycero-2,3-cyclic phosphate + ethanolamine. Its function is as follows. Dermonecrotic toxins cleave the phosphodiester linkage between the phosphate and headgroup of certain phospholipids (sphingolipid and lysolipid substrates), forming an alcohol (often choline) and a cyclic phosphate. This toxin acts on sphingomyelin (SM). It may also act on ceramide phosphoethanolamine (CPE), lysophosphatidylcholine (LPC) and lysophosphatidylethanolamine (LPE), but not on lysophosphatidylserine (LPS), and lysophosphatidylglycerol (LPG). It acts by transphosphatidylation, releasing exclusively cyclic phosphate products as second products. Induces dermonecrosis, hemolysis, increased vascular permeability, edema, inflammatory response, and platelet aggregation. In Loxosceles arizonica (Arizona brown spider), this protein is Dermonecrotic toxin LarSicTox-alphaIB1c.